Consider the following 227-residue polypeptide: Cytidylate kinase (227 aa).

Residue 12–20 (GPSGAGKGT) coordinates ATP.

It belongs to the cytidylate kinase family. Type 1 subfamily.

Its subcellular location is the cytoplasm. The enzyme catalyses CMP + ATP = CDP + ADP. It carries out the reaction dCMP + ATP = dCDP + ADP. This is Cytidylate kinase from Salmonella paratyphi B (strain ATCC BAA-1250 / SPB7).